The sequence spans 115 residues: Viral Lymphotactin (115 aa).

The signal sequence occupies residues 1–19; the sequence is MRLLTILALCCVAIWVVES. C30 and C67 are disulfide-bonded.

The protein belongs to the intercrine gamma family. In terms of assembly, interacts with host XCR1. N-glycosylated and O-glycosylated.

It is found in the secreted. Its function is as follows. Chemoattractant for CD4-dendritic cells, but not for CD4+ dendritic cells, T-cells or B-cells. This Rat cytomegalovirus (isolate England) (RCMV-E) protein is Viral Lymphotactin (vXCL1).